The sequence spans 441 residues: Methylenetetrahydrofolate--tRNA-(uracil-5-)-methyltransferase TrmFO (441 aa).

11 to 16 (GAGLAG) is a binding site for FAD.

The protein belongs to the MnmG family. TrmFO subfamily. The cofactor is FAD.

Its subcellular location is the cytoplasm. It catalyses the reaction uridine(54) in tRNA + (6R)-5,10-methylene-5,6,7,8-tetrahydrofolate + NADH + H(+) = 5-methyluridine(54) in tRNA + (6S)-5,6,7,8-tetrahydrofolate + NAD(+). The catalysed reaction is uridine(54) in tRNA + (6R)-5,10-methylene-5,6,7,8-tetrahydrofolate + NADPH + H(+) = 5-methyluridine(54) in tRNA + (6S)-5,6,7,8-tetrahydrofolate + NADP(+). In terms of biological role, catalyzes the folate-dependent formation of 5-methyl-uridine at position 54 (M-5-U54) in all tRNAs. The polypeptide is Methylenetetrahydrofolate--tRNA-(uracil-5-)-methyltransferase TrmFO (Lactiplantibacillus plantarum (strain ATCC BAA-793 / NCIMB 8826 / WCFS1) (Lactobacillus plantarum)).